The following is a 382-amino-acid chain: uncharacterized protein (382 aa).

12 consecutive transmembrane segments (helical) span residues 8-28 (VLLLLCGLLLFTISIAVLNTL), 41-61 (WQVGMVSSSYFSGNLVGTLIA), 73-93 (SYHYSCILFALATCGLMLSVD), 94-114 (FWSWLGWRFFAGVACALIWVI), 133-153 (AAYMMVYYLGTVTGQLLLGVV), 157-177 (LLSVIPWVSALVITAMLPLLF), 208-228 (GCIISGVLLGSLYGLLPLYLS), 235-255 (ASVGWWMALLVSSGIIGQWPI), 274-294 (VVILGSIAILGNYALAPALFI), 295-315 (LGCAGFTLYPVAMAWACEKVS), 325-345 (ALLMSYTIGSLTGPTMTSLLM), and 349-369 (SDNLLFIMIAGVALVYLMMLL).

The protein belongs to the major facilitator superfamily. YcaD (TC 2.A.1.26) family.

The protein resides in the cell inner membrane. This is an uncharacterized protein from Yersinia enterocolitica serotype O:8 / biotype 1B (strain NCTC 13174 / 8081).